The chain runs to 229 residues: 7-cyano-7-deazaguanine synthase (229 aa).

7 to 17 (LSGGLDSTTVL) serves as a coordination point for ATP. Cysteine 191, cysteine 204, cysteine 207, and cysteine 210 together coordinate Zn(2+).

It belongs to the QueC family. Zn(2+) serves as cofactor.

It catalyses the reaction 7-carboxy-7-deazaguanine + NH4(+) + ATP = 7-cyano-7-deazaguanine + ADP + phosphate + H2O + H(+). It functions in the pathway purine metabolism; 7-cyano-7-deazaguanine biosynthesis. Functionally, catalyzes the ATP-dependent conversion of 7-carboxy-7-deazaguanine (CDG) to 7-cyano-7-deazaguanine (preQ(0)). The protein is 7-cyano-7-deazaguanine synthase of Cyanothece sp. (strain PCC 7425 / ATCC 29141).